The primary structure comprises 440 residues: Thymidine phosphorylase (440 aa).

The protein belongs to the thymidine/pyrimidine-nucleoside phosphorylase family. Homodimer.

It carries out the reaction thymidine + phosphate = 2-deoxy-alpha-D-ribose 1-phosphate + thymine. Its pathway is pyrimidine metabolism; dTMP biosynthesis via salvage pathway; dTMP from thymine: step 1/2. Functionally, the enzymes which catalyze the reversible phosphorolysis of pyrimidine nucleosides are involved in the degradation of these compounds and in their utilization as carbon and energy sources, or in the rescue of pyrimidine bases for nucleotide synthesis. The sequence is that of Thymidine phosphorylase from Salmonella heidelberg (strain SL476).